The sequence spans 178 residues: Large ribosomal subunit protein uL16 (178 aa).

Belongs to the universal ribosomal protein uL16 family.

In Pyrobaculum calidifontis (strain DSM 21063 / JCM 11548 / VA1), this protein is Large ribosomal subunit protein uL16.